A 453-amino-acid chain; its full sequence is Lysine histidine transporter-like 1 (453 aa).

Residues 1-44 are Cytoplasmic-facing; the sequence is MYIQMTDGVPPPPEQSSLDHRIDELERQKEIDDWLPITSSRNAK. Helical transmembrane passes span 45–65 and 66–86; these read WWYSTFHNVTAMVGAGVLGLP and FFMAQLGWGPGIAVLILSWII. Over 87–122 the chain is Cytoplasmic; the sequence is TLYTLWQMVEMHEMVPGKRFDRYHELGQFAFGERLG. Residues 123 to 143 traverse the membrane as a helical segment; sequence LYIIVPQQIIVEVGVCIVYMV. Residues 144–164 lie on the Extracellular side of the membrane; it reads TGGQSLKKFHEIACQDCSPIR. Residues 165–185 traverse the membrane as a helical segment; the sequence is LSFFIMIFASSHFVLSHLPNF. The Cytoplasmic portion of the chain corresponds to 186–187; it reads NS. Residues 188–208 form a helical membrane-spanning segment; sequence ISGVSLVAAVMSLSYSTIAWT. The Extracellular segment spans residues 209 to 231; the sequence is ATAAKGVQEDVQYGYKSGTTAST. A helical membrane pass occupies residues 232 to 252; it reads VLSFFTGLGGIAFAYAGHNVV. Residues 253–276 are Cytoplasmic-facing; that stretch reads LEIQATIPSTPSNPSKGPMWRGVV. The chain crosses the membrane as a helical span at residues 277-297; it reads VAYVVVALCYFPVALVGYGVF. Residues 298-318 are Extracellular-facing; the sequence is GNAVLDNVLMSLETPVWAIAT. Residues 319 to 339 form a helical membrane-spanning segment; it reads ANLFVVMHVIGSYQIFAMPVF. The Cytoplasmic portion of the chain corresponds to 340–359; sequence DMVETFLVKKLNFKPSTVLR. A helical transmembrane segment spans residues 360-382; the sequence is FIVRNVYVALTMFIGIMIPFFGG. At 383–385 the chain is on the extracellular side; the sequence is LLA. A helical membrane pass occupies residues 386-408; that stretch reads FFGGFAFAPTSYFLPCIMWLLIY. The Cytoplasmic portion of the chain corresponds to 409 to 412; it reads KPKR. Residues 413–433 traverse the membrane as a helical segment; it reads FSLSWWTNWVCIVLGVVLMIL. Residues 434-453 lie on the Extracellular side of the membrane; the sequence is SSIGGLRQIIIQSKDYSFFS.

Belongs to the amino acid/polyamine transporter 2 family. Amino acid/auxin permease (AAAP) (TC 2.A.18.2) subfamily.

It is found in the cell membrane. Amino acid transporter. The sequence is that of Lysine histidine transporter-like 1 from Arabidopsis thaliana (Mouse-ear cress).